A 259-amino-acid polypeptide reads, in one-letter code: Cytochrome c oxidase subunit 3 (259 aa).

7 helical membrane-spanning segments follow: residues 13 to 33 (PWPL…ASWF), 36 to 56 (HGFL…IQWW), 80 to 100 (GMIL…WAFF), 125 to 145 (FSVP…VTWA), 160 to 180 (ALIL…GEYM), 195 to 215 (FFVA…FLAI), and 237 to 257 (AWYW…IYWW).

It belongs to the cytochrome c oxidase subunit 3 family. In terms of assembly, component of the cytochrome c oxidase (complex IV, CIV), a multisubunit enzyme composed of a catalytic core of 3 subunits and several supernumerary subunits. The complex exists as a monomer or a dimer and forms supercomplexes (SCs) in the inner mitochondrial membrane with ubiquinol-cytochrome c oxidoreductase (cytochrome b-c1 complex, complex III, CIII).

The protein resides in the mitochondrion inner membrane. The catalysed reaction is 4 Fe(II)-[cytochrome c] + O2 + 8 H(+)(in) = 4 Fe(III)-[cytochrome c] + 2 H2O + 4 H(+)(out). Functionally, component of the cytochrome c oxidase, the last enzyme in the mitochondrial electron transport chain which drives oxidative phosphorylation. The respiratory chain contains 3 multisubunit complexes succinate dehydrogenase (complex II, CII), ubiquinol-cytochrome c oxidoreductase (cytochrome b-c1 complex, complex III, CIII) and cytochrome c oxidase (complex IV, CIV), that cooperate to transfer electrons derived from NADH and succinate to molecular oxygen, creating an electrochemical gradient over the inner membrane that drives transmembrane transport and the ATP synthase. Cytochrome c oxidase is the component of the respiratory chain that catalyzes the reduction of oxygen to water. Electrons originating from reduced cytochrome c in the intermembrane space (IMS) are transferred via the dinuclear copper A center (CU(A)) of subunit 2 and heme A of subunit 1 to the active site in subunit 1, a binuclear center (BNC) formed by heme A3 and copper B (CU(B)). The BNC reduces molecular oxygen to 2 water molecules using 4 electrons from cytochrome c in the IMS and 4 protons from the mitochondrial matrix. The polypeptide is Cytochrome c oxidase subunit 3 (COIII) (Lumbricus terrestris (Common earthworm)).